A 450-amino-acid polypeptide reads, in one-letter code: NADP-specific glutamate dehydrogenase (450 aa).

Residue Lys-111 is part of the active site.

Belongs to the Glu/Leu/Phe/Val dehydrogenases family. In terms of assembly, homohexamer.

The catalysed reaction is L-glutamate + NADP(+) + H2O = 2-oxoglutarate + NH4(+) + NADPH + H(+). The protein is NADP-specific glutamate dehydrogenase (GDHA) of Laccaria bicolor (strain S238N-H82 / ATCC MYA-4686) (Bicoloured deceiver).